The chain runs to 88 residues: UPF0250 protein Sfri_0694 (88 aa).

It belongs to the UPF0250 family.

This is UPF0250 protein Sfri_0694 from Shewanella frigidimarina (strain NCIMB 400).